Consider the following 116-residue polypeptide: U16-barytoxin-Tl1f (116 aa).

The first 20 residues, 1–20, serve as a signal peptide directing secretion; that stretch reads MKTIIVFLSLLVLATKFGDA. Residues 21–74 constitute a propeptide that is removed on maturation; the sequence is NEGVNQEQMKEVIQNEFREDFLNEMAAMSLLQQLEAIESTLLEKEADRNSRQKR. 3 cysteine pairs are disulfide-bonded: Cys75–Cys90, Cys82–Cys95, and Cys89–Cys110. Asn85 is a glycosylation site (N-linked (GlcNAc...) asparagine).

It belongs to the neurotoxin 14 (magi-1) family. 06 (ICK-Trit) subfamily. Expressed by the venom gland.

It is found in the secreted. In terms of biological role, ion channel inhibitor. In Trittame loki (Brush-footed trapdoor spider), this protein is U16-barytoxin-Tl1f.